The primary structure comprises 103 residues: Large ribosomal subunit protein uL24 (103 aa).

This sequence belongs to the universal ribosomal protein uL24 family. In terms of assembly, part of the 50S ribosomal subunit.

Its function is as follows. One of two assembly initiator proteins, it binds directly to the 5'-end of the 23S rRNA, where it nucleates assembly of the 50S subunit. One of the proteins that surrounds the polypeptide exit tunnel on the outside of the subunit. This chain is Large ribosomal subunit protein uL24, found in Sinorhizobium medicae (strain WSM419) (Ensifer medicae).